We begin with the raw amino-acid sequence, 805 residues long: BLOC-2 complex member HPS6 (805 aa).

Residues Gly743–Leu805 are disordered. Positions Gly764–Gly773 are enriched in pro residues.

Component of the biogenesis of lysosome-related organelles complex-2 (or BLOC2) composed of HPS3, HPS5 and HPS6. Interacts with HPS5 and HPS3. Interacts with biogenesis of lysosome-related organelles complex-1 (BLOC1). Interacts with dynein intermediate chain. Interacts with AP-3 complex. Interacts with DCTN1. As to expression, widely expressed, with lowest expression in skeletal muscle.

The protein localises to the microsome membrane. The protein resides in the cytoplasm. It localises to the cytosol. It is found in the early endosome membrane. Its subcellular location is the lysosome membrane. Its function is as follows. May regulate the synthesis and function of lysosomes and of highly specialized organelles, such as melanosomes and platelet dense granules. Acts as a cargo adapter for the dynein-dynactin motor complex to mediate the transport of lysosomes from the cell periphery to the perinuclear region. Facilitates retrograde lysosomal trafficking by linking the motor complex to lysosomes, and perinuclear positioning of lysosomes is crucial for the delivery of endocytic cargos to lysosomes, for lysosome maturation and functioning. The chain is BLOC-2 complex member HPS6 (Hps6) from Mus musculus (Mouse).